The chain runs to 87 residues: MQKYRRRNTVAFTVLAYFTFFAGVFLFSIGLYNADNLELNEKGYYIAVMILVAVGAILTQKVTRDNAEDNEIIAEQEKRQNQSHIES.

A run of 2 helical transmembrane segments spans residues 10-30 (VAFT…FSIG) and 43-63 (GYYI…QKVT).

It localises to the cell membrane. This is an uncharacterized protein from Bacillus subtilis (strain 168).